The following is a 587-amino-acid chain: MKRTWNVCLTALLSVLLVAGSVPFHAEAKKPPKSYDEYKQVDVGKDGMVATAHPLASEIGADVLKKGGNAIDAAVAIQFALNVTEPMMSGIGGGGFMMVYDGKTKDTTIIDSRERAPAGATPDMFLDENGKAIPFSERVTKGTAVGVPGTLKGLEEALDKWGTRSMKQLITPSIKLAEKGFPIDSVLAEAISDYQEKLSRTAAKDVFLPNGEPLKEGDTLIQKDLAKTFKLIRSKGTDAFYKGKFAKTLSDTVQDFGGSMTEKDLENYDITIDEPIWGDYQGYQIATTPPPSSGGIFLLQMLKILDHFNLSQYDVRSWEKYQLLAETMHLSYADRASYAGDPEFVNVPLKGLLHPDYIKERQQLINLDQVNKKPKAGDPWKYQEGSANYKQVEQPKDKVEGQTTHFTVADRWGNVVSYTTTIEQLFGTGIMVPDYGVILNNELTDFDAIPGGANEVQPNKRPLSSMTPTILFKDDKPVLTVGSPGGATIISSVLQTILYHIEYGMELKAAVEEPRIYTNSMSSYRYEDGVPKDVLSKLNGMGHKFGTSPVDIGNVQSISIDHENGTFKGVADSSRNGAAIGINLKRK.

A signal peptide spans 1 to 28 (MKRTWNVCLTALLSVLLVAGSVPFHAEA). The propeptide occupies 29 to 35 (KKPPKSY). L-glutamate is bound at residue Arg113. Residue Thr403 is the Nucleophile of the active site. Residues Thr421, Glu423, Glu442, Asp445, 464–465 (SS), and 485–486 (GG) contribute to the L-glutamate site.

The protein belongs to the gamma-glutamyltransferase family. This enzyme consists of two polypeptide chains, which are synthesized in precursor form from a single polypeptide. Post-translationally, cleaved by autocatalysis into a large and a small subunit.

It localises to the secreted. It catalyses the reaction an N-terminal (5-L-glutamyl)-[peptide] + an alpha-amino acid = 5-L-glutamyl amino acid + an N-terminal L-alpha-aminoacyl-[peptide]. The enzyme catalyses glutathione + H2O = L-cysteinylglycine + L-glutamate. It carries out the reaction an S-substituted glutathione + H2O = an S-substituted L-cysteinylglycine + L-glutamate. The protein operates within sulfur metabolism; glutathione metabolism. Cleaves the gamma-glutamyl bond of extracellular glutathione (gamma-Glu-Cys-Gly), glutathione conjugates, and other gamma-glutamyl compounds. The metabolism of glutathione releases free glutamate and the dipeptide cysteinyl-glycine, which is hydrolyzed to cysteine and glycine by dipeptidases. This is Glutathione hydrolase proenzyme (ggt) from Bacillus subtilis (strain 168).